Consider the following 126-residue polypeptide: Large ribosomal subunit protein bL17 (126 aa).

The protein belongs to the bacterial ribosomal protein bL17 family. As to quaternary structure, part of the 50S ribosomal subunit. Contacts protein L32.

The chain is Large ribosomal subunit protein bL17 from Xylella fastidiosa (strain 9a5c).